The following is a 483-amino-acid chain: NAD-dependent protein deacetylase SRT1 (483 aa).

Residues 27 to 270 enclose the Deacetylase sirtuin-type domain; the sequence is PELLHKKIEE…MYMMNLRIPP (244 aa). Residues 53-57, 63-65, and 114-117 contribute to the NAD(+) site; these read AGIST, DFR, and QNVD. The active-site Proton acceptor is histidine 134. Residues cysteine 142, cysteine 145, cysteine 167, and cysteine 172 each coordinate Zn(2+). Residues 209–211 and 235–237 contribute to the NAD(+) site; these read GTS and NLQ.

It belongs to the sirtuin family. Class IV subfamily. It depends on Zn(2+) as a cofactor.

The protein localises to the nucleus. It carries out the reaction N(6)-acetyl-L-lysyl-[protein] + NAD(+) + H2O = 2''-O-acetyl-ADP-D-ribose + nicotinamide + L-lysyl-[protein]. Functionally, NAD-dependent protein deacetylase. Has deacetylase activity towards H3K9Ac. May have a function in the safeguard against genome instability and DNA damage to ensure plant cell growth. May negatively regulate metabolic signal transduction involving methanol and jasmonates during leaf senescence. Required for histone H3K9Ac deacetylation and repression of AP2-1/RSR1 and amylase genes during early seed development. Functions as an epigenetic regulator to repress the expression of glycolytic genes and glycolysis in seedlings. Reduces lysine acetylation of the glycolytic glyceraldehyde-3-phosphate dehydrogenase (GAPDH), which is found to also function as an activator of glycolytic gene expression. The protein is NAD-dependent protein deacetylase SRT1 of Oryza sativa subsp. indica (Rice).